The chain runs to 42 residues: Putative protein RNF216-like (42 aa).

The chain is Putative protein RNF216-like (RNF216P1) from Homo sapiens (Human).